The sequence spans 556 residues: U3 small nucleolar RNA-associated protein 18 homolog (556 aa).

The span at 1–24 shows a compositional bias: basic residues; sequence MPPERRRRMKLDRRTGAKPKRKPG. Residues 1 to 70 form a disordered region; the sequence is MPPERRRRMK…IAVAAAEEER (70 aa). Residues 43-65 are compositionally biased toward low complexity; that stretch reads APSSQRKPPARPSAAAAAIAVAA. Lysine 84 participates in a covalent cross-link: Glycyl lysine isopeptide (Lys-Gly) (interchain with G-Cter in SUMO2). The disordered stretch occupies residues 111–143; the sequence is RGPRVQEHEDSGDSEVENEAKGNFPPQKKPVWV. Phosphoserine is present on residues serine 121 and serine 124. Glycyl lysine isopeptide (Lys-Gly) (interchain with G-Cter in SUMO2) cross-links involve residues lysine 183 and lysine 201. Residues 193–219 form a disordered region; the sequence is VPAWAETTKRKTSSDDESEEDEDDLLQ. Threonine 204 carries the post-translational modification Phosphothreonine. A phosphoserine mark is found at serine 205, serine 206, and serine 210. The segment covering 207–216 has biased composition (acidic residues); the sequence is DDESEEDEDD. Threonine 221 is modified (phosphothreonine). 6 WD repeats span residues 249–288, 293–333, 339–380, 381–419, 421–462, and 471–512; these read PTVA…NPKI, LERF…LIPV, LKEK…GSMK, INGR…CLNR, VDEG…QETN, and NLVT…VFSN. Residue lysine 517 forms a Glycyl lysine isopeptide (Lys-Gly) (interchain with G-Cter in SUMO2) linkage.

It belongs to the WD repeat UTP18 family. Part of the small subunit (SSU) processome, composed of more than 70 proteins and the RNA chaperone small nucleolar RNA (snoRNA) U3.

The protein resides in the nucleus. Its subcellular location is the nucleolus. Part of the small subunit (SSU) processome, first precursor of the small eukaryotic ribosomal subunit. During the assembly of the SSU processome in the nucleolus, many ribosome biogenesis factors, an RNA chaperone and ribosomal proteins associate with the nascent pre-rRNA and work in concert to generate RNA folding, modifications, rearrangements and cleavage as well as targeted degradation of pre-ribosomal RNA by the RNA exosome. Involved in nucleolar processing of pre-18S ribosomal RNA. This chain is U3 small nucleolar RNA-associated protein 18 homolog, found in Homo sapiens (Human).